Consider the following 160-residue polypeptide: Anaerobic nitrite reductase HBII (160 aa).

Positions Gly-8–Lys-157 constitute a Globin domain. The Homodimerization signature appears at Glu-41–Ser-45. Heme b-binding residues include Ser-51, Lys-65, His-69, Lys-99, Ser-103, and His-104. Positions Asp-111–Glu-123 match the Homodimerization motif.

This sequence belongs to the plant globin family. As to quaternary structure, homodimer. It depends on heme b as a cofactor.

It localises to the cytoplasm. The protein localises to the nucleus. The enzyme catalyses Fe(III)-heme b-[protein] + nitric oxide + H2O = Fe(II)-heme b-[protein] + nitrite + 2 H(+). Functionally, phytoglobin that reduces nitrite to nitric oxide (NO) under anoxic conditions (e.g. during flooding or in waterlogged soil) and upon root nodulation. Required for general plant development and during nodulation, especially for the onset of symbiosis. Monitors nitric oxide (NO) levels during early phase of the nitrogen-fixing symbiosis and buffers oxygen in functioning nodules. May not function as an oxygen storage or transport protein. Has an unusually high affinity for O(2) through a hexacoordinate heme iron because of a very low dissociation constant. The chain is Anaerobic nitrite reductase HBII from Casuarina glauca (Swamp oak).